The chain runs to 182 residues: Phospholipase A2 inhibitor gamma subunit A2 (182 aa).

8 disulfides stabilise this stretch: Cys-3–Cys-27, Cys-6–Cys-13, Cys-20–Cys-48, Cys-54–Cys-75, Cys-76–Cys-81, Cys-99–Cys-124, Cys-117–Cys-146, and Cys-150–Cys-172. A glycan (N-linked (GlcNAc...) asparagine) is linked at Asn-157.

The protein belongs to the CNF-like-inhibitor family. Heterodimer of subunit A and subunit B.

Its subcellular location is the secreted. Its function is as follows. Phospholipase A2 (PA2) inhibitor. Inhibits the enzymatic activity of PA2 of Deinagkistrodon acutus. Also shows a wide anti-hemorrhage activities to D.acutus, Naja atra and Agkistrodon halys venom. The native protein is more potent than the recombinant one. In Trimerodytes annularis (Red-bellied annulate keelback), this protein is Phospholipase A2 inhibitor gamma subunit A2.